The chain runs to 111 residues: SPbeta prophage-derived uncharacterized protein YolC (111 aa).

Positions M1 to A25 are cleaved as a signal peptide.

The chain is SPbeta prophage-derived uncharacterized protein YolC (yolC) from Bacillus subtilis (strain 168).